Here is a 616-residue protein sequence, read N- to C-terminus: Chaperone protein HscA (616 aa).

It belongs to the heat shock protein 70 family.

Functionally, chaperone involved in the maturation of iron-sulfur cluster-containing proteins. Has a low intrinsic ATPase activity which is markedly stimulated by HscB. Involved in the maturation of IscU. The polypeptide is Chaperone protein HscA (Escherichia fergusonii (strain ATCC 35469 / DSM 13698 / CCUG 18766 / IAM 14443 / JCM 21226 / LMG 7866 / NBRC 102419 / NCTC 12128 / CDC 0568-73)).